The sequence spans 393 residues: Glutamate 5-kinase (393 aa).

An ATP-binding site is contributed by Lys-17. Positions 57, 144, and 156 each coordinate substrate. An ATP-binding site is contributed by 176–177 (SD). The 78-residue stretch at 282–359 (AGSIAIDAGA…AEIAAILGYA (78 aa)) folds into the PUA domain. Residues 374-393 (APSGARSEEGGNEKKGKLHA) form a disordered region. Over residues 379–393 (RSEEGGNEKKGKLHA) the composition is skewed to basic and acidic residues.

It belongs to the glutamate 5-kinase family.

It is found in the cytoplasm. The enzyme catalyses L-glutamate + ATP = L-glutamyl 5-phosphate + ADP. It participates in amino-acid biosynthesis; L-proline biosynthesis; L-glutamate 5-semialdehyde from L-glutamate: step 1/2. In terms of biological role, catalyzes the transfer of a phosphate group to glutamate to form L-glutamate 5-phosphate. This is Glutamate 5-kinase from Sinorhizobium fredii (strain NBRC 101917 / NGR234).